The following is an 837-amino-acid chain: PE-PGRS family protein PE_PGRS4 (837 aa).

Residues 4–94 (VIAAPEVIAA…GAYAAAEAAA (91 aa)) form the PE domain. Over residues 811–825 (NGGKAGGTPGAGGTS) the composition is skewed to gly residues. The tract at residues 811-837 (NGGKAGGTPGAGGTSGLIIGENGLNGL) is disordered. The span at 826-837 (GLIIGENGLNGL) shows a compositional bias: low complexity.

This sequence belongs to the mycobacterial PE family. PGRS subfamily.

This is PE-PGRS family protein PE_PGRS4 from Mycobacterium tuberculosis (strain ATCC 25618 / H37Rv).